The primary structure comprises 108 residues: UPF0060 membrane protein CKO_01576 (108 aa).

4 consecutive transmembrane segments (helical) span residues 6–26, 29–49, 61–81, and 85–105; these read LLFF…WLWL, GATA…VWLL, AAYG…VDGV, and LYDW…VAGW.

The protein belongs to the UPF0060 family.

It is found in the cell inner membrane. The protein is UPF0060 membrane protein CKO_01576 of Citrobacter koseri (strain ATCC BAA-895 / CDC 4225-83 / SGSC4696).